The chain runs to 248 residues: PF03932 family protein CutC (248 aa).

It belongs to the CutC family.

It localises to the cytoplasm. This Citrobacter koseri (strain ATCC BAA-895 / CDC 4225-83 / SGSC4696) protein is PF03932 family protein CutC.